We begin with the raw amino-acid sequence, 289 residues long: tRNA U34 carboxymethyltransferase (289 aa).

Carboxy-S-adenosyl-L-methionine is bound by residues Lys60, Trp74, Lys79, Gly98, 120 to 122, 147 to 148, Tyr167, and Arg282; these read DPS and VE.

The protein belongs to the class I-like SAM-binding methyltransferase superfamily. CmoB family. In terms of assembly, homotetramer.

It catalyses the reaction carboxy-S-adenosyl-L-methionine + 5-hydroxyuridine(34) in tRNA = 5-carboxymethoxyuridine(34) in tRNA + S-adenosyl-L-homocysteine + H(+). Catalyzes carboxymethyl transfer from carboxy-S-adenosyl-L-methionine (Cx-SAM) to 5-hydroxyuridine (ho5U) to form 5-carboxymethoxyuridine (cmo5U) at position 34 in tRNAs. In Campylobacter concisus (strain 13826), this protein is tRNA U34 carboxymethyltransferase.